The chain runs to 306 residues: Polyisoprenyl-teichoic acid--peptidoglycan teichoic acid transferase TagU (306 aa).

Over 1 to 11 (MRNERRKKKKT) the chain is Cytoplasmic. A helical; Signal-anchor for type II membrane protein membrane pass occupies residues 12 to 32 (LLLTILTIIGLLVLGTGGYAY). Over 33–306 (YLWHKAASTV…TKELKESLEK (274 aa)) the chain is Extracellular.

This sequence belongs to the LytR/CpsA/Psr (LCP) family. Interacts with MreB. Interacts with FloT.

It localises to the cell membrane. It is found in the membrane raft. The protein operates within cell wall biogenesis. In terms of biological role, may catalyze the final step in cell wall teichoic acid biosynthesis, the transfer of the anionic cell wall polymers (APs) from their lipid-linked precursor to the cell wall peptidoglycan (PG). The polypeptide is Polyisoprenyl-teichoic acid--peptidoglycan teichoic acid transferase TagU (Bacillus subtilis (strain 168)).